The primary structure comprises 303 residues: Acetylglutamate kinase (303 aa).

Residues 76–77, Arg-98, and Asn-199 each bind substrate; that span reads GG.

This sequence belongs to the acetylglutamate kinase family. ArgB subfamily.

It is found in the cytoplasm. It catalyses the reaction N-acetyl-L-glutamate + ATP = N-acetyl-L-glutamyl 5-phosphate + ADP. The protein operates within amino-acid biosynthesis; L-arginine biosynthesis; N(2)-acetyl-L-ornithine from L-glutamate: step 2/4. Its function is as follows. Catalyzes the ATP-dependent phosphorylation of N-acetyl-L-glutamate. The chain is Acetylglutamate kinase from Clavibacter sepedonicus (Clavibacter michiganensis subsp. sepedonicus).